Here is a 667-residue protein sequence, read N- to C-terminus: Probable sulfate permease C320.05 (667 aa).

The segment at 1-27 (MSSPSENHLLGPKTSFIDNRTSTSRPL) is disordered. Residues 16 to 25 (FIDNRTSTSR) are compositionally biased toward polar residues. 12 helical membrane-spanning segments follow: residues 77 to 97 (IIWD…IALS), 102 to 122 (FLGV…ILYC), 162 to 182 (ILVT…AGLF), 198 to 218 (GCIL…FFGF), 240 to 260 (MSKA…LLIG), 275 to 295 (IVSI…SKKF), 301 to 321 (YGIA…LPLP), 336 to 356 (GVMC…AISL), 368 to 388 (LISL…PICG), 405 to 425 (VATI…MPVF), 433 to 453 (LASM…VEIF), and 465 to 485 (GIIF…GIIF). Residues 532 to 657 (SSTAVESAPR…DHVQDSIKKV (126 aa)) enclose the STAS domain.

This sequence belongs to the SLC26A/SulP transporter (TC 2.A.53) family.

The protein localises to the endoplasmic reticulum membrane. Possible sulfate transporter. This Schizosaccharomyces pombe (strain 972 / ATCC 24843) (Fission yeast) protein is Probable sulfate permease C320.05.